The primary structure comprises 981 residues: NAD(+) hydrolase tir-1 (981 aa).

Disordered stretches follow at residues 1 to 31 (MLPN…RSLK), 74 to 128 (QNEQ…PTQP), and 173 to 225 (LSTP…PVDQ). 2 stretches are compositionally biased toward polar residues: residues 12-23 (PSFQSLNNNNQR) and 74-85 (QNEQDGETTSTD). Residues 87–97 (AFFELDDDDDL) are compositionally biased toward acidic residues. Low complexity predominate over residues 98–114 (SSPSVPGSPVDPPSISV). Pro residues predominate over residues 115–128 (PLPPKSAPPCPTQP). The span at 182–200 (EEMHNGQVRKESEYRRFKS) shows a compositional bias: basic and acidic residues. SAM domains follow at residues 614 to 678 (WTCA…LKVA) and 684 to 750 (VDES…AKHP). Residues 760 to 857 (KQIDVFISYR…EHQKNIIPIF (98 aa)) enclose the TIR domain. 769–770 (RR) is a binding site for NAD(+). Residue Glu842 is part of the active site. 3 stretches are compositionally biased toward polar residues: residues 908–939 (TTPT…TGPS), 954–963 (FTPTGSQERA), and 972–981 (PSASTTSDRN). A disordered region spans residues 908–981 (TTPTTKEMPS…PSASTTSDRN (74 aa)).

It belongs to the SARM1 family. Homodimer. Interacts with rab-1, pal-1 and unc-43. Highly expressed in hypodermis. Localizes to postsynaptic regions of axons.

It is found in the cytoplasm. The catalysed reaction is NAD(+) + H2O = ADP-D-ribose + nicotinamide + H(+). Functionally, NAD(+) hydrolase, which plays a key role in non-apoptotic cell death by regulating NAD(+) metabolism. In response to stress, homooligomerizes and catalyzes cleavage of NAD(+) into ADP-D-ribose (ADPR) and nicotinamide; NAD(+) cleavage promoting non-apoptotic neuronal cell death. In males, involved in non-apoptotic death of the linker cell which guides gonad elongation during larval development. Required for both innate immune response and specification of AWC(OFF) neuron. During late embryogenesis, it acts downstream of CAMKII (unc-43) to regulate specification of asymmetric odorant receptors in AWC(OFF) neuron via the nsy-1/ASK1 pmk-1/p38 MAP kinase signaling cascade. Required to localize nsy-1 to postsynaptic regions of AWC neuron, suggesting that it may act by assembling a signaling complex that regulate odorant receptor expression. Also plays a central role in resistance to infection to a broad range of bacterial and fungi pathogens, possibly by activating pmk-1, independently of the NF-kappa-B pathway. Required for expression of antimicrobial peptides nlp-29 and nlp-31. Its role in immune response and neuron specification may be mediated by the same nsy-1/ASK1 pmk-1/p38 MAP kinase cascade signaling pathway. Involved in the response to anoxic conditions probably by activating the p38 pathway composed of nsy-1/sek-1/pmk-1. Involved in regulation of the serotonergic response of ADF neurons to pathogenic food. In addition, plays a role in the up-regulation of gcs-1 upon arsenite treatment, most likely through activation of pmk-1, to confer protection against toxicity induced by heavy metals. Its function is as follows. Regulates expression of antimicrobial peptide nlp-29 in response to fungal infection or physical injury. The polypeptide is NAD(+) hydrolase tir-1 (Caenorhabditis elegans).